The primary structure comprises 254 residues: (2Z,6E)-farnesyl diphosphate synthase (254 aa).

Asp34 is a catalytic residue. Asp34 provides a ligand contact to Mg(2+). Residues 35-38, Trp39, His52, and 80-82 contribute to the substrate site; these read GNRR and STD. Residue Asn83 is the Proton acceptor of the active site. Substrate-binding positions include Arg86, Arg203, and 209-211; that span reads RLS. Glu222 is a Mg(2+) binding site.

This sequence belongs to the UPP synthase family. Z-FPP synthase subfamily. Homodimer. Mg(2+) serves as cofactor.

The enzyme catalyses isopentenyl diphosphate + (2E)-geranyl diphosphate = (2Z,6E)-farnesyl diphosphate + diphosphate. Catalyzes the condensation of only one isopentenyl pyrophosphate (IPP) unit in the cis configuration to E-geranyl diphosphate (E-GPP) generating the 15 carbon product (2Z,6E)-farnesyl diphosphate (Z-FPP or EZ-FPP). Only geranyl diphosphate (GPP) can be used as isoprenyl acceptor. The sequence is that of (2Z,6E)-farnesyl diphosphate synthase from Thermobifida fusca (strain YX).